Here is a 570-residue protein sequence, read N- to C-terminus: MSEKHPGPLVVEGKLTDAERMKLESNYLRGTIAEDLNDGLTGGFKGDNFLLIRFHGMYQQDDRDIRAERAEQKLEPRHAMLLRCRLPGGVITTKQWQAIDKFAGENTIYGSIRLTNRQTFQFHGILKKNVKPVHQMLHSVGLDALATANDMNRNVLCTSNPYESQLHAEAYEWAKKISEHLLPRTRAYAEIWLDQEKVATTDEEPILGQTYLPRKFKTTVVIPPQNDIDLHANDMNFVAIAENGKLVGFNLLVGGGLSIEHGNKKTYARTASEFGYLPLEHTLAVAEAVVTTQRDWGNRTDRKNAKTKYTLERVGVETFKAEVERRAGIKFEPSRPYEFTGRGDRIGWVKGIDDNWHLTLFIENGRILDYPGRPLKTGLLEIAKIHKGDFRITANQNLIIAGVPESEKAKIEKIAKESGLMNAVTPQRENSMACVSFPTCPLAMAEAERFLPSFIDNIDNLMVKHGVSDEHIVMRVTGCPNGCGRAMLAEVGLVGKAPGRYNLHLGGNRIGTRIPRMYKENITEPEILASLDELIGRWAKEREAGEGFGDFTVRAGIIRPVLDPARDLWD.

[4Fe-4S] cluster contacts are provided by C434, C440, C479, and C483. C483 is a binding site for siroheme.

Belongs to the nitrite and sulfite reductase 4Fe-4S domain family. Alpha(8)-beta(8). The alpha component is a flavoprotein, the beta component is a hemoprotein. Siroheme is required as a cofactor. [4Fe-4S] cluster serves as cofactor.

It carries out the reaction hydrogen sulfide + 3 NADP(+) + 3 H2O = sulfite + 3 NADPH + 4 H(+). It functions in the pathway sulfur metabolism; hydrogen sulfide biosynthesis; hydrogen sulfide from sulfite (NADPH route): step 1/1. Component of the sulfite reductase complex that catalyzes the 6-electron reduction of sulfite to sulfide. This is one of several activities required for the biosynthesis of L-cysteine from sulfate. The protein is Sulfite reductase [NADPH] hemoprotein beta-component of Shigella flexneri serotype 5b (strain 8401).